A 77-amino-acid polypeptide reads, in one-letter code: Acyl carrier protein (77 aa).

The region spanning 1-76 (MENFDKVKDI…DAVKYINSLE (76 aa)) is the Carrier domain. Residue Ser36 is modified to O-(pantetheine 4'-phosphoryl)serine.

The protein belongs to the acyl carrier protein (ACP) family. 4'-phosphopantetheine is transferred from CoA to a specific serine of apo-ACP by AcpS. This modification is essential for activity because fatty acids are bound in thioester linkage to the sulfhydryl of the prosthetic group.

The protein resides in the cytoplasm. It functions in the pathway lipid metabolism; fatty acid biosynthesis. In terms of biological role, carrier of the growing fatty acid chain in fatty acid biosynthesis. In Staphylococcus epidermidis (strain ATCC 12228 / FDA PCI 1200), this protein is Acyl carrier protein.